We begin with the raw amino-acid sequence, 298 residues long: Protein transport protein SEC13-1 (298 aa).

WD repeat units lie at residues 7 to 46 (AHND…HKLV), 51 to 92 (GHEG…WSQI), 97 to 138 (VHTA…TATP), 143 to 196 (AHAI…QSYL), 203 to 245 (GHSD…GPWV), and 253 to 292 (EFPD…KWES).

Belongs to the WD repeat SEC13 family. In terms of assembly, the COPII coat is composed of at least 5 proteins: the SEC23/24 complex, the SEC13/31 complex, and the protein SAR1. Component of the nuclear pore complex (NPC). NPC constitutes the exclusive means of nucleocytoplasmic transport. NPCs allow the passive diffusion of ions and small molecules and the active, nuclear transport receptor-mediated bidirectional transport of macromolecules such as proteins, RNAs, ribonucleoparticles (RNPs), and ribosomal subunits across the nuclear envelope. Due to its 8-fold rotational symmetry, all subunits are present with 8 copies or multiples thereof.

Its subcellular location is the cytoplasmic vesicle. The protein resides in the COPII-coated vesicle membrane. It is found in the endoplasmic reticulum membrane. The protein localises to the nucleus. It localises to the nuclear pore complex. Its function is as follows. Component of the coat protein complex II (COPII) which promotes the formation of transport vesicles from the endoplasmic reticulum (ER). The coat has two main functions, the physical deformation of the endoplasmic reticulum membrane into vesicles and the selection of cargo molecules. It also functions as a component of the nuclear pore complex (NPC). NPC components, collectively referred to as nucleoporins (NUPs), can play the role of both NPC structural components and of docking or interaction partners for transiently associated nuclear transport factors. SEC13 is required for efficient mRNA export from the nucleus to the cytoplasm and for correct nuclear pore biogenesis and distribution. The chain is Protein transport protein SEC13-1 (SEC131) from Candida glabrata (strain ATCC 2001 / BCRC 20586 / JCM 3761 / NBRC 0622 / NRRL Y-65 / CBS 138) (Yeast).